Consider the following 346-residue polypeptide: Small ribosomal subunit biogenesis GTPase RsgA 2 (346 aa).

Residues E93–F248 form the CP-type G domain. Residues T138–D141 and G190–S198 each bind GTP. Positions 271, 276, 278, and 284 each coordinate Zn(2+).

It belongs to the TRAFAC class YlqF/YawG GTPase family. RsgA subfamily. In terms of assembly, monomer. Associates with 30S ribosomal subunit, binds 16S rRNA. It depends on Zn(2+) as a cofactor.

The protein resides in the cytoplasm. Its function is as follows. One of several proteins that assist in the late maturation steps of the functional core of the 30S ribosomal subunit. Helps release RbfA from mature subunits. May play a role in the assembly of ribosomal proteins into the subunit. Circularly permuted GTPase that catalyzes slow GTP hydrolysis, GTPase activity is stimulated by the 30S ribosomal subunit. This chain is Small ribosomal subunit biogenesis GTPase RsgA 2, found in Listeria monocytogenes serotype 4b (strain F2365).